A 537-amino-acid chain; its full sequence is Zinc finger and BTB domain-containing protein 18 (537 aa).

The 68-residue stretch at 24 to 91 (CDSTVLVGDA…MYEGKLQFKS (68 aa)) folds into the BTB domain. The segment covering 122-143 (TAEADSTKREEDTSSCSDKVES) has biased composition (basic and acidic residues). Disordered stretches follow at residues 122 to 232 (TAEA…RVSA) and 335 to 355 (ASEL…LGGD). Composition is skewed to low complexity over residues 182–195 (RLPS…TTSP) and 208–229 (SPAG…ASRR). 4 consecutive C2H2-type zinc fingers follow at residues 385-407 (FMCP…LSTH), 425-447 (PTCS…ERTH), 453-475 (YTCT…AVVH), and 481-504 (HACK…RKFH).

It belongs to the krueppel C2H2-type zinc-finger protein family. ZBTB18 subfamily.

It is found in the nucleus. In terms of biological role, transcriptional repressor that plays a role in various developmental processes. Specifically binds the consensus DNA sequence 5'-[AC]ACATCTG[GT][AC]-3' which contains the E box core, and acts by recruiting chromatin remodeling multiprotein complexes. The chain is Zinc finger and BTB domain-containing protein 18 (zbtb18) from Danio rerio (Zebrafish).